The sequence spans 178 residues: Dual-action ribosomal maturation protein DarP (178 aa).

Belongs to the DarP family.

It is found in the cytoplasm. Functionally, member of a network of 50S ribosomal subunit biogenesis factors which assembles along the 30S-50S interface, preventing incorrect 23S rRNA structures from forming. Promotes peptidyl transferase center (PTC) maturation. The protein is Dual-action ribosomal maturation protein DarP of Haemophilus influenzae (strain PittEE).